Consider the following 526-residue polypeptide: Microphthalmia-associated transcription factor (526 aa).

A disordered region spans residues 20 to 54 (EPKTYYELKSQPLKSSSSAEHSGASKPPLSSSTMT). Low complexity predominate over residues 34–44 (SSSSAEHSGAS). Position 180 is a phosphoserine; by MAPK (Ser180). Lys289 participates in a covalent cross-link: Glycyl lysine isopeptide (Lys-Gly) (interchain with G-Cter in SUMO). The bHLH domain occupies 311–364 (QKKDNHNLIERRRRFNINDRIKELGTLIPKSNDPDMRWNKGTILKASVDYIRKL). A coiled-coil region spans residues 355-401 (KASVDYIRKLQREQQRAKDLENRQKKLEHANRHLLLRVQELEMQARA). A leucine-zipper region spans residues 374 to 395 (LENRQKKLEHANRHLLLRVQEL). Phosphoserine; by GSK3 is present on Ser405. A Phosphoserine modification is found at Ser414. A Glycyl lysine isopeptide (Lys-Gly) (interchain with G-Cter in SUMO) cross-link involves residue Lys423. Ser491 is modified (phosphoserine). The interval 496–526 (TDPLLSSVSPGASKTSSRRSSMSAEETEHAC) is disordered. The span at 507–519 (ASKTSSRRSSMSA) shows a compositional bias: low complexity. Ser516 is subject to Phosphoserine; by RPS6KA1.

It belongs to the MiT/TFE family. In terms of assembly, homodimer or heterodimer; dimerization is mediated via the coiled coil region. Efficient DNA binding requires dimerization with another bHLH protein. Binds DNA in the form of homodimer or heterodimer with either TFE3, TFEB or TFEC. Identified in a complex with HINT1 and CTNNB1. Interacts with KARS1. Interacts with VSX2. In terms of processing, phosphorylation at Ser-405 significantly enhances the ability to bind the tyrosinase promoter. Phosphorylated at Ser-180 and Ser-516 following KIT signaling, triggering a short live activation: Phosphorylation at Ser-180 and Ser-516 by MAPK and RPS6KA1, respectively, activate the transcription factor activity but also promote ubiquitination and subsequent degradation by the proteasome. Phosphorylated in response to blue light (415nm). Post-translationally, ubiquitinated following phosphorylation at Ser-180, leading to subsequent degradation by the proteasome. Deubiquitinated by USP13, preventing its degradation.

It is found in the nucleus. The protein localises to the cytoplasm. Transcription factor that regulates the expression of genes with essential roles in cell differentiation, proliferation and survival. Binds to M-boxes (5'-TCATGTG-3') and symmetrical DNA sequences (E-boxes) (5'-CACGTG-3') found in the promoters of target genes, such as BCL2 and tyrosinase (TYR). Plays an important role in melanocyte development by regulating the expression of tyrosinase (TYR) and tyrosinase-related protein 1 (TYRP1). Plays a critical role in the differentiation of various cell types, such as neural crest-derived melanocytes, mast cells, osteoclasts and optic cup-derived retinal pigment epithelium. This is Microphthalmia-associated transcription factor (Mitf) from Rattus norvegicus (Rat).